Reading from the N-terminus, the 398-residue chain is S-adenosylmethionine decarboxylase proenzyme (398 aa).

Residues Glu-18 and Glu-21 contribute to the active site. The active-site Schiff-base intermediate with substrate; via pyruvic acid is Ser-78. Ser-78 carries the post-translational modification Pyruvic acid (Ser); by autocatalysis. The Proton donor; for catalytic activity role is filled by Cys-92. Active-site proton acceptor; for processing activity residues include Ser-243 and His-256.

This sequence belongs to the eukaryotic AdoMetDC family. Pyruvate is required as a cofactor. In terms of processing, is synthesized initially as an inactive proenzyme. Formation of the active enzyme involves a self-maturation process in which the active site pyruvoyl group is generated from an internal serine residue via an autocatalytic post-translational modification. Two non-identical subunits are generated from the proenzyme in this reaction, and the pyruvate is formed at the N-terminus of the alpha chain, which is derived from the carboxyl end of the proenzyme. The post-translation cleavage follows an unusual pathway, termed non-hydrolytic serinolysis, in which the side chain hydroxyl group of the serine supplies its oxygen atom to form the C-terminus of the beta chain, while the remainder of the serine residue undergoes an oxidative deamination to produce ammonia and the pyruvoyl group blocking the N-terminus of the alpha chain.

The enzyme catalyses S-adenosyl-L-methionine + H(+) = S-adenosyl 3-(methylsulfanyl)propylamine + CO2. The protein operates within amine and polyamine biosynthesis; S-adenosylmethioninamine biosynthesis; S-adenosylmethioninamine from S-adenosyl-L-methionine: step 1/1. The chain is S-adenosylmethionine decarboxylase proenzyme (SAMDC) from Oryza sativa subsp. japonica (Rice).